The following is a 403-amino-acid chain: Aspartic protease pepA (403 aa).

A signal peptide spans 1–20 (MVLITQLGAALAVFSALTVA). Residues 21–67 (APTKGKARFSAPQVGIPKKAKHHPAAAYARALHKFGMKIPKAVSDAA) constitute a propeptide, activation peptide. Residues 82–400 (YVTQVTVGGS…DTQGPRIGFA (319 aa)) enclose the Peptidase A1 domain. The active site involves aspartate 98. A glycan (N-linked (GlcNAc...) asparagine) is linked at asparagine 270. Aspartate 293 is a catalytic residue. An intrachain disulfide couples cysteine 329 to cysteine 362.

The protein belongs to the peptidase A1 family. In terms of assembly, monomer.

Its subcellular location is the secreted. In terms of biological role, secreted aspartic endopeptidase that allows assimilation of proteinaceous substrates. The scissile peptide bond is attacked by a nucleophilic water molecule activated by two aspartic residues in the active site. Shows a broad primary substrate specificity. Favors hydrophobic residues at the P1 and P1' positions. The polypeptide is Aspartic protease pepA (Arthroderma gypseum (strain ATCC MYA-4604 / CBS 118893) (Microsporum gypseum)).